A 281-amino-acid polypeptide reads, in one-letter code: Phosphatidylserine decarboxylase proenzyme (281 aa).

Active-site charge relay system; for autoendoproteolytic cleavage activity residues include Asp90, His143, and Ser248. The active-site Schiff-base intermediate with substrate; via pyruvic acid; for decarboxylase activity is the Ser248. Ser248 bears the Pyruvic acid (Ser); by autocatalysis mark.

Belongs to the phosphatidylserine decarboxylase family. PSD-B subfamily. Prokaryotic type I sub-subfamily. In terms of assembly, heterodimer of a large membrane-associated beta subunit and a small pyruvoyl-containing alpha subunit. The cofactor is pyruvate. Is synthesized initially as an inactive proenzyme. Formation of the active enzyme involves a self-maturation process in which the active site pyruvoyl group is generated from an internal serine residue via an autocatalytic post-translational modification. Two non-identical subunits are generated from the proenzyme in this reaction, and the pyruvate is formed at the N-terminus of the alpha chain, which is derived from the carboxyl end of the proenzyme. The autoendoproteolytic cleavage occurs by a canonical serine protease mechanism, in which the side chain hydroxyl group of the serine supplies its oxygen atom to form the C-terminus of the beta chain, while the remainder of the serine residue undergoes an oxidative deamination to produce ammonia and the pyruvoyl prosthetic group on the alpha chain. During this reaction, the Ser that is part of the protease active site of the proenzyme becomes the pyruvoyl prosthetic group, which constitutes an essential element of the active site of the mature decarboxylase.

The protein localises to the cell membrane. It catalyses the reaction a 1,2-diacyl-sn-glycero-3-phospho-L-serine + H(+) = a 1,2-diacyl-sn-glycero-3-phosphoethanolamine + CO2. Its pathway is phospholipid metabolism; phosphatidylethanolamine biosynthesis; phosphatidylethanolamine from CDP-diacylglycerol: step 2/2. Its function is as follows. Catalyzes the formation of phosphatidylethanolamine (PtdEtn) from phosphatidylserine (PtdSer). The protein is Phosphatidylserine decarboxylase proenzyme of Francisella philomiragia subsp. philomiragia (strain ATCC 25017 / CCUG 19701 / FSC 153 / O#319-036).